The following is a 465-amino-acid chain: Glycine-rich cell wall structural protein 1.8 (465 aa).

The first 30 residues, 1–30, serve as a signal peptide directing secretion; the sequence is MATIHRLPSLVFLVLLALGVCSARRALLTL. 8 consecutive repeat copies span residues 205–226, 227–248, 249–270, 271–292, 293–314, 315–336, 337–358, and 359–380. Positions 205–380 are 8 X 22 AA tandem repeats of H-G-G-G-[GAY]-G-G-G-Q-G-G-G-[AD]-G-G-G-Y-[GA]-[AT]-[GV]-G-E; the sequence is HGGGGGGGQG…AGGGYGTGGE (176 aa).

As to expression, expressed in young hypocotyls.

The protein resides in the secreted. It localises to the cell wall. Functionally, responsible for plasticity of the cell wall. The sequence is that of Glycine-rich cell wall structural protein 1.8 from Phaseolus vulgaris (Kidney bean).